Here is a 151-residue protein sequence, read N- to C-terminus: MGRMHAPGKGLSQSALPYRRSVPTWLKLASDDVKEQIYKLAKKGLTPSQIGVILRDSHGVAQVRFVTGNKILRILKSKGLAPDLPEDLYHLIKKAVAVRKHLERNRKDKDAKFRLILIESRIHRLARYYKTKRVLPPNWKYESSTASALVA.

Lys-27 bears the N6-acetyllysine; alternate mark. At Lys-27 the chain carries N6-succinyllysine; alternate. A Glycyl lysine isopeptide (Lys-Gly) (interchain with G-Cter in ubiquitin) cross-link involves residue Lys-27. Ser-30 bears the Phosphoserine mark. N6-succinyllysine is present on Lys-34. The residue at position 38 (Tyr-38) is a Phosphotyrosine. Lys-43 participates in a covalent cross-link: Glycyl lysine isopeptide (Lys-Gly) (interchain with G-Cter in SUMO2).

The protein belongs to the universal ribosomal protein uS15 family. As to quaternary structure, component of the small ribosomal subunit. Part of the small subunit (SSU) processome, composed of more than 70 proteins and the RNA chaperone small nucleolar RNA (snoRNA) U3. Post-translationally, ubiquitinated at Lys-27 by RNF14 and RNF25 in response to ribosome collisions (ribosome stalling).

It is found in the cytoplasm. Its subcellular location is the nucleus. The protein localises to the nucleolus. Component of the small ribosomal subunit. The ribosome is a large ribonucleoprotein complex responsible for the synthesis of proteins in the cell. Part of the small subunit (SSU) processome, first precursor of the small eukaryotic ribosomal subunit. During the assembly of the SSU processome in the nucleolus, many ribosome biogenesis factors, an RNA chaperone and ribosomal proteins associate with the nascent pre-rRNA and work in concert to generate RNA folding, modifications, rearrangements and cleavage as well as targeted degradation of pre-ribosomal RNA by the RNA exosome. This Cricetulus griseus (Chinese hamster) protein is Small ribosomal subunit protein uS15 (RPS13).